Reading from the N-terminus, the 248-residue chain is 1-(5-phosphoribosyl)-5-[(5-phosphoribosylamino)methylideneamino] imidazole-4-carboxamide isomerase (248 aa).

Asp-17 functions as the Proton acceptor in the catalytic mechanism. The Proton donor role is filled by Asp-136.

It belongs to the HisA/HisF family.

The protein localises to the cytoplasm. It catalyses the reaction 1-(5-phospho-beta-D-ribosyl)-5-[(5-phospho-beta-D-ribosylamino)methylideneamino]imidazole-4-carboxamide = 5-[(5-phospho-1-deoxy-D-ribulos-1-ylimino)methylamino]-1-(5-phospho-beta-D-ribosyl)imidazole-4-carboxamide. It participates in amino-acid biosynthesis; L-histidine biosynthesis; L-histidine from 5-phospho-alpha-D-ribose 1-diphosphate: step 4/9. The polypeptide is 1-(5-phosphoribosyl)-5-[(5-phosphoribosylamino)methylideneamino] imidazole-4-carboxamide isomerase (Arthrobacter sp. (strain FB24)).